A 477-amino-acid chain; its full sequence is Glycogen synthase (477 aa).

Lys-15 contacts ADP-alpha-D-glucose.

Belongs to the glycosyltransferase 1 family. Bacterial/plant glycogen synthase subfamily.

It catalyses the reaction [(1-&gt;4)-alpha-D-glucosyl](n) + ADP-alpha-D-glucose = [(1-&gt;4)-alpha-D-glucosyl](n+1) + ADP + H(+). Its pathway is glycan biosynthesis; glycogen biosynthesis. In terms of biological role, synthesizes alpha-1,4-glucan chains using ADP-glucose. This chain is Glycogen synthase, found in Myxococcus xanthus (strain DK1622).